The chain runs to 970 residues: Insulin-degrading enzyme-like 1, peroxisomal (970 aa).

His-69 contacts Zn(2+). Glu-72 (proton acceptor) is an active-site residue. His-73 serves as a coordination point for Zn(2+). Glu-143 is a catalytic residue. Glu-150 is a Zn(2+) binding site.

This sequence belongs to the peptidase M16 family. The cofactor is Zn(2+).

It localises to the peroxisome. Its function is as follows. Peptidase that might be involved in pathogen or wound response. Not required for peroxisome biogenesis, indole-3-butyric acid (IBA) metabolism, fatty acid beta-oxidation or degradation of glyoxylate cycle enzymes during seedling development. The sequence is that of Insulin-degrading enzyme-like 1, peroxisomal (PXM16) from Arabidopsis thaliana (Mouse-ear cress).